Consider the following 466-residue polypeptide: MASEGDKLMGGRFVGSTDPIMQMLSTSMSTEQRLSEVDIQASIAYAKALEKAGILTKTELEKILSGLEKISEEWSKGVFVVTQSDEDIHTANERRLKELIGDIAGKLNTGRSRNEQVVTDLKLFMKNSLSVISTHLLQLIKTLVERAAIEIDVILPGYTHLQKAQPIRWSQFLLSHAVALTRDSERLGEVKRRINVLPLGSGALAGNPLDIDREMLRSELDFASISLNSMDAISERDFVVEFLSVATLLMIHLSKMAEDLIIYSTSEFGFLTLSDAFSTGSSLMPQKKNPDSLELIRSKAGRVFGRLASILMVLKGLPSTYNKDLQEDKEAVFDVVDTLTAVLQVATGVISTLQISKENMEKALTPEMLSTDLALYLVRKGMPFRQAHTASGKAVHLAETKGITINNLTLEDLKSISPLFSSDVSQVFNFVNSVEQYTAMGGTAKSSVTTQIEHLRELMKKQKEQA.

Residues serine 27, asparagine 114, and threonine 159 each coordinate 2-(N(omega)-L-arginino)succinate. Catalysis depends on histidine 160, which acts as the Proton acceptor. The active-site Proton donor is serine 281. 2-(N(omega)-L-arginino)succinate contacts are provided by asparagine 289, tyrosine 321, glutamine 326, and lysine 329.

This sequence belongs to the lyase 1 family. Argininosuccinate lyase subfamily. As to quaternary structure, homotetramer. As to expression, eye lens.

The enzyme catalyses 2-(N(omega)-L-arginino)succinate = fumarate + L-arginine. It participates in amino-acid biosynthesis; L-arginine biosynthesis; L-arginine from L-ornithine and carbamoyl phosphate: step 3/3. Delta crystallin, the principal crystallin in embryonic lens, is found only in birds and reptiles. This protein also functions as an enzymatically active argininosuccinate lyase. The polypeptide is Argininosuccinate lyase (ASL) (Anser anser anser (Western greylag goose)).